The following is a 310-amino-acid chain: Small ribosomal subunit biogenesis GTPase RsgA (310 aa).

The CP-type G domain occupies 77-238 (LSKQSHILAA…IIDTPGIKGF (162 aa)). Residues 126–129 (NKVD) and 180–188 (GHSGVGKST) each bind GTP. Cysteine 262, cysteine 267, histidine 269, and cysteine 275 together coordinate Zn(2+).

This sequence belongs to the TRAFAC class YlqF/YawG GTPase family. RsgA subfamily. In terms of assembly, monomer. Associates with 30S ribosomal subunit, binds 16S rRNA. The cofactor is Zn(2+).

The protein localises to the cytoplasm. Its function is as follows. One of several proteins that assist in the late maturation steps of the functional core of the 30S ribosomal subunit. Helps release RbfA from mature subunits. May play a role in the assembly of ribosomal proteins into the subunit. Circularly permuted GTPase that catalyzes slow GTP hydrolysis, GTPase activity is stimulated by the 30S ribosomal subunit. The protein is Small ribosomal subunit biogenesis GTPase RsgA of Bacteroides fragilis (strain YCH46).